The following is a 717-amino-acid chain: F-box only protein 42 (717 aa).

Residues 1 to 30 (MASSSDSEDDSFMAVDQEETVLEGTMEQDE) are compositionally biased toward acidic residues. The tract at residues 1–47 (MASSSDSEDDSFMAVDQEETVLEGTMEQDEEPHPVLEAEETRHNRSM) is disordered. Basic and acidic residues predominate over residues 31-43 (EPHPVLEAEETRH). The 50-residue stretch at 44–93 (NRSMSELPEEVLEYILSFLSPYQEHKTAALVCKQWYRLIKGVAHQCYHGF) folds into the F-box domain. Kelch repeat units lie at residues 132-184 (SMYV…VYKD), 186-242 (LVLF…VIDD), 244-293 (MIVF…VIDD), and 295-342 (TILI…LWCH). Disordered stretches follow at residues 361 to 472 (RAPL…SAAE) and 508 to 539 (PASS…GVHT). Residues 363–376 (PLSPSLNSRPSPIS) show a composition bias toward low complexity. Residues S365 and S373 each carry the phosphoserine modification. A Phosphothreonine modification is found at T378. Polar residues-rich tracts occupy residues 416–426 (QRQTPSGSREG) and 455–469 (SLDS…STPS). S552 carries the post-translational modification Phosphoserine. Positions 570–596 (GPSASAALSPPLGSSPGSPGSQSLSSG) are enriched in low complexity. The interval 570 to 635 (GPSASAALSP…PQSLNVGKPL (66 aa)) is disordered.

As to quaternary structure, component of some SCF complex, composed of CUL1, SKP1, RBX1 and FBXO42. Interacts (via the kelch domain) with p53/TP53; interaction is direct.

Substrate-recognition component of some SCF (SKP1-CUL1-F-box protein)-type E3 ubiquitin ligase complex. Specifically recognizes p53/TP53, promoting its ubiquitination and degradation. The sequence is that of F-box only protein 42 (FBXO42) from Pongo abelii (Sumatran orangutan).